The following is a 601-amino-acid chain: RNA-binding protein MEX3B (601 aa).

Disordered stretches follow at residues M1–R39 and G90–T109. Position 4 is a phosphoserine (S4). A compositionally biased stretch (gly residues) spans G13–E33. 2 consecutive KH domains span residues D98–I159 and Q192–I253. Disordered stretches follow at residues L284–Y332 and T344–S448. Residue S320 is modified to Phosphoserine. Low complexity-rich tracts occupy residues S320 to S331 and N362 to G371. The span at D395–T404 shows a compositional bias: pro residues. Over residues A420–F442 the composition is skewed to low complexity. The residue at position 494 (S494) is a Phosphoserine. The segment at L514–G546 is disordered. Over residues S519–S540 the composition is skewed to low complexity. Residues C550 to H590 form an RING-type zinc finger.

Post-translationally, phosphorylation at Ser-494 creates a docking site for 14-3-3, which stabilizes the protein and modulates its ability to bind RNA.

Its subcellular location is the cytoplasm. The protein resides in the nucleus. The protein localises to the P-body. It is found in the cytoplasmic granule. In terms of biological role, RNA-binding protein. May be involved in post-transcriptional regulatory mechanisms. In Mus musculus (Mouse), this protein is RNA-binding protein MEX3B (Mex3b).